A 117-amino-acid polypeptide reads, in one-letter code: Snaclec CHH-B subunit beta (117 aa).

Disulfide bonds link Cys2/Cys13, Cys30/Cys115, and Cys92/Cys107. The 108-residue stretch at 9 to 116 (YEGHCYRVFQ…CSKTHNVVCK (108 aa)) folds into the C-type lectin domain.

Belongs to the snaclec family. As to quaternary structure, heterodimer of subunits alpha and beta; disulfide-linked. As to expression, expressed by the venom gland.

The protein resides in the secreted. In terms of biological role, binds to the subunit GPIbalpha (GP1BA) of the platelet GPIb/V/IX receptor system. It inhibits ristocetin- and vWF-induced platelet aggregation in platelet-rich plasma by inhibiting the binding of vWF to GPIbalpha. The protein is Snaclec CHH-B subunit beta of Crotalus horridus (Timber rattlesnake).